The chain runs to 301 residues: Probable alpha-L-glutamate ligase 1 (301 aa).

The ATP-grasp domain occupies 104–287 (LQLLSRKGIG…VTEPIVEYIE (184 aa)). Residues Lys-141, 178–179 (EY), Asp-187, and 211–213 (RSN) contribute to the ATP site. 3 residues coordinate Mg(2+): Asp-248, Glu-260, and Asn-262. Mn(2+) is bound by residues Asp-248, Glu-260, and Asn-262.

The protein belongs to the RimK family. Mg(2+) is required as a cofactor. It depends on Mn(2+) as a cofactor.

This chain is Probable alpha-L-glutamate ligase 1, found in Shewanella oneidensis (strain ATCC 700550 / JCM 31522 / CIP 106686 / LMG 19005 / NCIMB 14063 / MR-1).